Consider the following 368-residue polypeptide: Dihydroorotate dehydrogenase (quinone) (368 aa).

FMN is bound by residues 67 to 71 (AGFDK) and Thr-91. Residue Lys-71 participates in substrate binding. 116-120 (NRMGF) provides a ligand contact to substrate. Asn-146 and Asn-179 together coordinate FMN. Substrate is bound at residue Asn-179. The active-site Nucleophile is Ser-182. Asn-184 contacts substrate. FMN is bound by residues Lys-222 and Thr-250. Residue 251 to 252 (NT) participates in substrate binding. FMN is bound by residues Gly-276, Gly-305, and 326-327 (YS).

It belongs to the dihydroorotate dehydrogenase family. Type 2 subfamily. As to quaternary structure, monomer. FMN serves as cofactor.

The protein localises to the cell membrane. It catalyses the reaction (S)-dihydroorotate + a quinone = orotate + a quinol. It functions in the pathway pyrimidine metabolism; UMP biosynthesis via de novo pathway; orotate from (S)-dihydroorotate (quinone route): step 1/1. In terms of biological role, catalyzes the conversion of dihydroorotate to orotate with quinone as electron acceptor. This chain is Dihydroorotate dehydrogenase (quinone), found in Streptomyces avermitilis (strain ATCC 31267 / DSM 46492 / JCM 5070 / NBRC 14893 / NCIMB 12804 / NRRL 8165 / MA-4680).